Reading from the N-terminus, the 413-residue chain is Putative competence-damage inducible protein (413 aa).

It belongs to the CinA family.

In Desulforudis audaxviator (strain MP104C), this protein is Putative competence-damage inducible protein.